Reading from the N-terminus, the 462-residue chain is Cysteine--tRNA ligase (462 aa).

Cys29 contributes to the Zn(2+) binding site. The short motif at 31-41 is the 'HIGH' region element; sequence PTVYDHAHIGN. Residues Cys214, His239, and Glu243 each coordinate Zn(2+). The 'KMSKS' region signature appears at 272–276; sequence KMSKS. Residue Lys275 participates in ATP binding.

Belongs to the class-I aminoacyl-tRNA synthetase family. In terms of assembly, monomer. It depends on Zn(2+) as a cofactor.

The protein resides in the cytoplasm. The enzyme catalyses tRNA(Cys) + L-cysteine + ATP = L-cysteinyl-tRNA(Cys) + AMP + diphosphate. The chain is Cysteine--tRNA ligase from Azorhizobium caulinodans (strain ATCC 43989 / DSM 5975 / JCM 20966 / LMG 6465 / NBRC 14845 / NCIMB 13405 / ORS 571).